Consider the following 248-residue polypeptide: 1,2-phenylacetyl-CoA epoxidase, subunit C (248 aa).

Residues 76-79 (QFSN) and 177-179 (IAL) contribute to the substrate site.

In terms of assembly, forms a stable heterotetramer (dimer of heterodimers) with PaaA and a stable heterodimer with PaaB.

The protein operates within aromatic compound metabolism; phenylacetate degradation. In terms of biological role, component of 1,2-phenylacetyl-CoA epoxidase multicomponent enzyme system which catalyzes the reduction of phenylacetyl-CoA (PA-CoA) to form 1,2-epoxyphenylacetyl-CoA. The subunit C may be essential for structural integrity of the alpha subunit. The polypeptide is 1,2-phenylacetyl-CoA epoxidase, subunit C (paaC) (Escherichia coli (strain K12)).